The chain runs to 236 residues: CD81 antigen (236 aa).

Residues 1 to 12 (MGVEGCTKCIKY) lie on the Cytoplasmic side of the membrane. The helical transmembrane segment at 13–33 (LLFVFNFVFWLAGGVILGVAL) threads the bilayer. Residues 34–63 (WLRHDPQTTNLLYLELGDKPAPNTFYVGIY) are Extracellular-facing. Residues 64–84 (ILIAVGAVMMFVGFLGCYGAI) form a helical membrane-spanning segment. Residues 85 to 89 (QESQC) lie on the Cytoplasmic side of the membrane. Residues 90 to 112 (LLGTFFTCLVILFACEVAAGIWG) form a helical membrane-spanning segment. Topologically, residues 113–201 (FVNKDQIAKD…QKIDELFSGK (89 aa)) are extracellular. 2 disulfide bridges follow: Cys156–Cys190 and Cys157–Cys175. The chain crosses the membrane as a helical span at residues 202–224 (LYLIGIAAIVVAVIMIFEMILSM). Cholesterol is bound at residue Glu219. At 225–236 (VLCCGIRNSSVY) the chain is on the cytoplasmic side.

It belongs to the tetraspanin (TM4SF) family. As to quaternary structure, homodimer. Part of a complex composed of CD19, CR2/CD21, CD81 and IFITM1/CD225 in the membrane of mature B cells. Interacts (via the second extracellular domain) with CD19; this interaction is initiated early during biosynthesis in the ER and enables trafficking of only properly folded CD19. Part of a complex that includes MHC class II/HLA-DR molecules and IFITM1. Interacts with IFITM1. Interacts with IFITM2 and IFITM3. Part of integrin-tetraspanin complex composed of CD9, CD81, beta-1 and beta-2 integrins in the membrane of monocyte/macrophages. Interacts (via the second extracellular domain) with integrin ITGAV:ITGB3. Interacts with CD247/CD3 zeta, ICAM1 and CD9 at the immune synapse on T cell membrane. Part of a GPCR-tetraspanin complex consisting at least of ADGRG1, CD81, possibly CD9, and GNA11 in which CD81 enhances the association of ADGRG1 with GNA11. Part of a complex composed of CD9, CD81, PTGFRN and IGSF8. Interacts directly with IGSF8. Interacts with CD53 and SCIMP. Interacts with SAMHD1 (via its C-terminus). Interacts with glypican GPC3 and with the transcriptional repressor HHEX; binding to GPC3 decreases the availability of free CD81 for binding to HHEX, resulting in nuclear translocation of HHEX and transcriptional repression. Interacts with CLDN1. Interacts with CLDN6 and CLDN9. Not glycosylated. In terms of processing, likely constitutively palmitoylated at low levels. Protein palmitoylation is up-regulated upon coligation of BCR and CD9-C2R-CD81 complexes in lipid rafts.

The protein localises to the cell membrane. It is found in the basolateral cell membrane. In terms of biological role, structural component of specialized membrane microdomains known as tetraspanin-enriched microdomains (TERMs), which act as platforms for receptor clustering and signaling. Essential for trafficking and compartmentalization of CD19 receptor on the surface of activated B cells. Upon initial encounter with microbial pathogens, enables the assembly of CD19-CR2/CD21 and B cell receptor (BCR) complexes at signaling TERMs, lowering the threshold dose of antigen required to trigger B cell clonal expansion and antibody production. In T cells, facilitates the localization of CD247/CD3 zeta at antigen-induced synapses with B cells, providing for costimulation and polarization toward T helper type 2 phenotype. Present in MHC class II compartments, may also play a role in antigen presentation. Can act both as positive and negative regulator of homotypic or heterotypic cell-cell fusion processes. Positively regulates sperm-egg fusion and may be involved in acrosome reaction. In myoblasts, associates with CD9 and PTGFRN and inhibits myotube fusion during muscle regeneration. In macrophages, associates with CD9 and beta-1 and beta-2 integrins, and prevents macrophage fusion into multinucleated giant cells specialized in ingesting complement-opsonized large particles. Also prevents the fusion of mononuclear cell progenitors into osteoclasts in charge of bone resorption. May regulate the compartmentalization of enzymatic activities. In T cells, defines the subcellular localization of dNTPase SAMHD1 and permits its degradation by the proteasome, thereby controlling intracellular dNTP levels. Also involved in cell adhesion and motility. Positively regulates integrin-mediated adhesion of macrophages, particularly relevant for the inflammatory response in the lung. The polypeptide is CD81 antigen (CD81) (Chlorocebus aethiops (Green monkey)).